The sequence spans 113 residues: Cell division topological specificity factor (113 aa).

This sequence belongs to the MinE family.

In terms of biological role, prevents the cell division inhibition by proteins MinC and MinD at internal division sites while permitting inhibition at polar sites. This ensures cell division at the proper site by restricting the formation of a division septum at the midpoint of the long axis of the cell. This Methylobacterium radiotolerans (strain ATCC 27329 / DSM 1819 / JCM 2831 / NBRC 15690 / NCIMB 10815 / 0-1) protein is Cell division topological specificity factor.